Consider the following 814-residue polypeptide: Leucine-rich repeat-containing protein 41 (814 aa).

Residues 45 to 54 (ALFELCGRAV) form an interaction with Elongin BC complex region. Phosphoserine is present on residues Ser155, Ser276, and Ser326. The disordered stretch occupies residues 265–408 (LCGEASRGRA…KKGARTRQGC (144 aa)). Residue Thr327 is modified to Phosphothreonine. Over residues 354-385 (TKRPPSAPATTSSASASSSTSSSKRAPASSAP) the composition is skewed to low complexity. Ser375 is subject to Phosphoserine. Positions 389 to 403 (PLKRFKRAAGKKGAR) are enriched in basic residues. LRR repeat units lie at residues 489-509 (WVSL…IFRL), 520-532 (AGCR…LSDL), 533-557 (FSPL…VLSI), 615-637 (SGSL…FGLV), 638-661 (LQTL…LADC), 703-730 (NSTL…VFSE), and 733-754 (SSSL…LLEF).

In terms of assembly, part of a E3 ubiquitin ligase complex with elongin BC complex (ELOB and ELOC), RBX1 and CUL5.

The chain is Leucine-rich repeat-containing protein 41 (LRRC41) from Bos taurus (Bovine).